The following is an 844-amino-acid chain: Beta-mannosidase B (844 aa).

The active-site Proton donor is glutamate 432. N-linked (GlcNAc...) asparagine glycosylation occurs at asparagine 723.

This sequence belongs to the glycosyl hydrolase 2 family. Beta-mannosidase B subfamily.

The catalysed reaction is Hydrolysis of terminal, non-reducing beta-D-mannose residues in beta-D-mannosides.. It functions in the pathway glycan metabolism; N-glycan degradation. Exoglycosidase that cleaves the single beta-linked mannose residue from the non-reducing end of beta-mannosidic oligosaccharides of various complexity and length. Prefers mannobiose over mannotriose and has no activity against polymeric mannan. Is also severely restricted by galactosyl substitutions at the +1 subsite. The protein is Beta-mannosidase B (mndB) of Aspergillus flavus (strain ATCC 200026 / FGSC A1120 / IAM 13836 / NRRL 3357 / JCM 12722 / SRRC 167).